The primary structure comprises 389 residues: PqqA peptide cyclase (389 aa).

One can recognise a Radical SAM core domain in the interval 19–234 (VGLPLWLLAE…TNEYRARLEA (216 aa)). The [4Fe-4S] cluster site is built by Cys-33, Cys-37, and Cys-40.

It belongs to the radical SAM superfamily. PqqE family. Interacts with PqqD. The interaction is necessary for activity of PqqE. [4Fe-4S] cluster is required as a cofactor.

The enzyme catalyses [PQQ precursor protein] + S-adenosyl-L-methionine = E-Y cross-linked-[PQQ precursor protein] + 5'-deoxyadenosine + L-methionine + H(+). It functions in the pathway cofactor biosynthesis; pyrroloquinoline quinone biosynthesis. Catalyzes the cross-linking of a glutamate residue and a tyrosine residue in the PqqA protein as part of the biosynthesis of pyrroloquinoline quinone (PQQ). This Pseudomonas syringae pv. syringae (strain B728a) protein is PqqA peptide cyclase.